A 1268-amino-acid chain; its full sequence is SR-related and CTD-associated factor 8 (1268 aa).

The CID domain maps to 1-139 (MEAVKTFNSE…PLLDMAAGIP (139 aa)). Thr-6 is modified (phosphothreonine). Lys-18 participates in a covalent cross-link: Glycyl lysine isopeptide (Lys-Gly) (interchain with G-Cter in SUMO1). The span at 270–283 (GEDSEHSEESKKEM) shows a compositional bias: basic and acidic residues. 3 disordered regions span residues 270–290 (GEDSEHSEESKKEMPTPQLSH), 322–355 (QQQPQKVTPQDSQEGTFGSEHSASPSQGSSQQHF), and 385–469 (EIFE…PVRS). A Phosphoserine modification is found at Ser-273. The span at 327–354 (KVTPQDSQEGTFGSEHSASPSQGSSQQH) shows a compositional bias: polar residues. Basic residues predominate over residues 394 to 443 (VAVRSRSRTHSRSRSRSPRKRRSRSRSGSRKRKHRKRSRSHSREKKRKAS). Residues 447–461 (SSERRAREREKERQK) are compositionally biased toward basic and acidic residues. The region spanning 477–551 (TTLWVGQVDK…KVIKIAWALN (75 aa)) is the RRM domain. Ser-617 is modified (phosphoserine). Positions 776–807 (QIPSGENTRPVIPSDIPSSAAMLAQPPGASST) are disordered. An asymmetric dimethylarginine mark is found at Arg-915, Arg-925, and Arg-936. Disordered regions lie at residues 984–1012 (PGRPSIDNVPNPDKRIPLGNDNIQQEGDR) and 1040–1065 (RLDPREGPGRPPLDARDHFGRPPVDM). An Asymmetric dimethylarginine modification is found at Arg-1071. Residues 1199–1268 (ATSQRKGDNV…VVESTETEGT (70 aa)) form a disordered region. The span at 1249–1262 (GTVAGVESEAVVES) shows a compositional bias: low complexity.

In terms of assembly, interacts with POLR2A; via C-terminal heptapeptide repeat domain (CTD) phosphorylated at 'Ser-2' and 'Ser-5'. Identified in a complex with CDC5L and other spliceosomal proteins.

It localises to the nucleus. It is found in the nucleus matrix. Anti-terminator protein required to prevent early mRNA termination during transcription. Together with SCAF4, acts by suppressing the use of early, alternative poly(A) sites, thereby preventing the accumulation of non-functional truncated proteins. Mechanistically, associates with the phosphorylated C-terminal heptapeptide repeat domain (CTD) of the largest RNA polymerase II subunit (POLR2A), and subsequently binds nascent RNA upstream of early polyadenylation sites to prevent premature mRNA transcript cleavage and polyadenylation. Independently of SCAF4, also acts as a positive regulator of transcript elongation. In Mus musculus (Mouse), this protein is SR-related and CTD-associated factor 8.